A 466-amino-acid chain; its full sequence is Amino acid permease 4 (466 aa).

The Cytoplasmic segment spans residues 1-22 (MDVPRPAFKCFDDDGRLKRSGT). A run of 2 helical transmembrane segments spans residues 23-43 (VWTA…LSLA) and 44-64 (WAIG…FSFV). Residues 65–111 (TYYSSTLLSDCYRTGDPVSGKRNYTYMDAVRSILGGFRFKICGLIQY) are Cytoplasmic-facing. A helical membrane pass occupies residues 112–132 (LNLFGITVGYTIAASISMMAI). Topologically, residues 133-177 (KRSNCFHESGGKNPCHMSSNPYMIMFGVTEILLSQIKDFDQIWWL) are extracellular. Residues 178–198 (SIVAAIMSFTYSAIGLALGII) form a helical membrane-spanning segment. Residues 199-226 (QVAANGVVKGSLTGISIGAVTQTQKIWR) are Cytoplasmic-facing. The helical transmembrane segment at 227–247 (TFQALGDIAFAYSYSVVLIEI) threads the bilayer. Topologically, residues 248–266 (QDTVRSPPAESKTMKIATR) are extracellular. The chain crosses the membrane as a helical span at residues 267-287 (ISIAVTTTFYMLCGCMGYAAF). The Cytoplasmic portion of the chain corresponds to 288 to 290 (GDK). A helical transmembrane segment spans residues 291-311 (APGNLLTGFGFYNPFWLLDVA). Topologically, residues 312 to 313 (NA) are extracellular. Residues 314 to 334 (AIVIHLVGAYQVFAQPIFAFI) form a helical membrane-spanning segment. Residues 335-369 (EKQAAARFPDSDLVTKEYEIRIPGFRSPYKVNVFR) are Cytoplasmic-facing. A helical membrane pass occupies residues 370–390 (AVYRSGFVVLTTVISMLMPFF). Residues 391–392 (ND) are Extracellular-facing. The helical transmembrane segment at 393 to 413 (VVGILGALGFWPLTVYFPVEM) threads the bilayer. Residues 414–435 (YIRQRKVERWSMKWVCLQMLSC) are Cytoplasmic-facing. Residues 436 to 456 (GCLMITLVAGVGSIAGVMLDL) traverse the membrane as a helical segment. The Extracellular portion of the chain corresponds to 457–466 (KVYKPFKTTY).

This sequence belongs to the amino acid/polyamine transporter 2 family. Amino acid/auxin permease (AAAP) (TC 2.A.18.2) subfamily. In terms of tissue distribution, expressed in leaves, stems and flowers.

Its subcellular location is the cell membrane. Its activity is regulated as follows. Inhibited by 2,4-dinitrophenol. Functionally, amino acid-proton symporter. Stereospecific transporter with a broad specificity for neutral amino acids, favoring small amino acids such as alanine, asparagine and glutamine. Also accepts large aromatic residues such as in phenlalanine or tyrosine. This Arabidopsis thaliana (Mouse-ear cress) protein is Amino acid permease 4 (AAP4).